A 44-amino-acid chain; its full sequence is Photosystem I reaction center subunit IX (44 aa).

Residues 7-27 form a helical membrane-spanning segment; the sequence is YLSVAPVLATLWFGSLAGLLI.

Belongs to the PsaJ family.

The protein resides in the plastid. It is found in the chloroplast thylakoid membrane. Its function is as follows. May help in the organization of the PsaE and PsaF subunits. The chain is Photosystem I reaction center subunit IX from Illicium oligandrum (Star anise).